A 382-amino-acid chain; its full sequence is Cholinephosphotransferase 1 (382 aa).

Residues Met1–Ala51 are Cytoplasmic-facing. A helical transmembrane segment spans residues Pro52–Tyr72. Asn53 contacts CDP-choline. The Lumenal segment spans residues Tyr73 to Pro82. The chain crosses the membrane as a helical span at residues Gly83 to Ala107. 2 residues coordinate Mg(2+): Asp100 and Asp103. CDP-choline is bound at residue Arg108. The Cytoplasmic portion of the chain corresponds to Arg108–Ser114. Residues Ala115 to Cys139 form a helical membrane-spanning segment. Asp121 provides a ligand contact to Mg(2+). Catalysis depends on His122, which acts as the Proton acceptor. Mg(2+) is bound at residue Asp125. Residues Cys140–Met149 are Lumenal-facing. The chain crosses the membrane as a helical span at residues Phe150 to Tyr168. The Cytoplasmic segment spans residues Val169 to Asp179. The chain crosses the membrane as a helical span at residues Val180–Phe196. The Lumenal segment spans residues Thr197 to Val211. The chain crosses the membrane as a helical span at residues Asn212–Met237. At Asn238–Leu254 the chain is on the cytoplasmic side. Residues Thr255–Ile270 form a helical membrane-spanning segment. Over Phe271–His282 the chain is Lumenal. A helical transmembrane segment spans residues Pro283–His305. Over Met306–Phe318 the chain is Cytoplasmic. The chain crosses the membrane as a helical span at residues Ile319 to Gln328. Residues Tyr329–Asp335 are Lumenal-facing. Residues Glu336–His365 traverse the membrane as a helical segment. The Cytoplasmic portion of the chain corresponds to Leu366–Asp382.

It belongs to the CDP-alcohol phosphatidyltransferase class-I family. It depends on Mg(2+) as a cofactor. Requires Mn(2+) as cofactor.

The protein localises to the golgi apparatus membrane. The enzyme catalyses CDP-choline + a 1,2-diacyl-sn-glycerol = a 1,2-diacyl-sn-glycero-3-phosphocholine + CMP + H(+). It catalyses the reaction 1-octadecanoyl-2-(5Z,8Z,11Z,14Z-eicosatetraenoyl)-sn-glycerol + CDP-choline = 1-octadecanoyl-2-(5Z,8Z,11Z,14Z-eicosatetraenoyl)-sn-glycero-3-phosphocholine + CMP + H(+). The catalysed reaction is 1-hexadecanoyl-2-(9Z-octadecenoyl)-sn-glycerol + CDP-choline = 1-hexadecanoyl-2-(9Z-octadecenoyl)-sn-glycero-3-phosphocholine + CMP + H(+). It carries out the reaction 1-hexadecanoyl-2-(4Z,7Z,10Z,13Z,16Z,19Z-docosahexaenoyl)-sn-glycerol + CDP-choline = 1-hexadecanoyl-2-(4Z,7Z,10Z,13Z,16Z,19Z-docosahexaenoyl)-sn-glycero-3-phosphocholine + CMP + H(+). The enzyme catalyses 1,2-dioctanoyl-sn-glycerol + CDP-choline = 1,2-dioctanoyl-sn-glycero-3-phosphocholine + CMP + H(+). It participates in phospholipid metabolism; phosphatidylcholine biosynthesis; phosphatidylcholine from phosphocholine: step 2/2. Catalyzes the final step of de novo phosphatidylcholine (PC) synthesis, i.e. the transfer of choline phosphate from CDP-choline to the free hydroxyl of a diacylglycerol (DAG), producing a PC. It thereby plays a central role in the formation and maintenance of vesicular membranes. The polypeptide is Cholinephosphotransferase 1 (chpt1) (Danio rerio (Zebrafish)).